A 575-amino-acid polypeptide reads, in one-letter code: Carboxylesterase 5A (575 aa).

A signal peptide spans 1 to 20 (MSGNWVHPGQILIWAIWVLA). The cysteines at positions 94 and 121 are disulfide-linked. Ser226 serves as the catalytic Acyl-ester intermediate. Asn281 carries N-linked (GlcNAc...) asparagine glycosylation. Glu345 (charge relay system) is an active-site residue. Asn363 is a glycosylation site (N-linked (GlcNAc...) asparagine). His454 acts as the Charge relay system in catalysis. N-linked (GlcNAc...) asparagine glycosylation is found at Asn513 and Asn524.

Belongs to the type-B carboxylesterase/lipase family. Post-translationally, N-glycosylated.

It is found in the secreted. The enzyme catalyses a carboxylic ester + H2O = an alcohol + a carboxylate + H(+). Its function is as follows. Involved in the detoxification of xenobiotics and in the activation of ester and amide prodrugs. The protein is Carboxylesterase 5A (CES5A) of Homo sapiens (Human).